The primary structure comprises 364 residues: MKRTPLFEKHVELGAKMVDFAGWEMPLYYTSIFEEVMAVRKSVGMFDVSHMGEFLVKGPEAVSFIDFLITNNFSSLPDGKALYSVMCNENGGIIDDLVVYKVSPDEALMVVNAANIEKDFNWIKSHSKNFNVEVSNISDTTALIAFQGPRAQEALQELVEDSLEEIAYYSFKKSIVAGVEAIVSRTGYTGEDGFELMIEAKNSPKVWDALMNLLRKIDGRPAGLGARDVCRLEATYLLYGQDMDENTNPFEVGLSWVVKLDKDFVGKEALLKAKEKVERKLVALELSGKRIARKGYEVSKNGERVGEITSGNFSPTLGKSIALALVSKSVKIGDQLGVVFPGGKLVEALVVKKPFYRGSVRREV.

It belongs to the GcvT family. As to quaternary structure, the glycine cleavage system is composed of four proteins: P, T, L and H.

The enzyme catalyses N(6)-[(R)-S(8)-aminomethyldihydrolipoyl]-L-lysyl-[protein] + (6S)-5,6,7,8-tetrahydrofolate = N(6)-[(R)-dihydrolipoyl]-L-lysyl-[protein] + (6R)-5,10-methylene-5,6,7,8-tetrahydrofolate + NH4(+). In terms of biological role, the glycine cleavage system catalyzes the degradation of glycine. This is Aminomethyltransferase from Thermotoga sp. (strain RQ2).